The chain runs to 371 residues: F-box protein At2g41170 (371 aa).

One can recognise an F-box domain in the interval 56–102 (KMSLLDLPDLTLDCILEKLSPSELCAMTSVCSELRDKCVSDHLWEKH).

The polypeptide is F-box protein At2g41170 (Arabidopsis thaliana (Mouse-ear cress)).